Reading from the N-terminus, the 212-residue chain is Probable nicotinate-nucleotide adenylyltransferase (212 aa).

The protein belongs to the NadD family.

It catalyses the reaction nicotinate beta-D-ribonucleotide + ATP + H(+) = deamido-NAD(+) + diphosphate. The protein operates within cofactor biosynthesis; NAD(+) biosynthesis; deamido-NAD(+) from nicotinate D-ribonucleotide: step 1/1. Functionally, catalyzes the reversible adenylation of nicotinate mononucleotide (NaMN) to nicotinic acid adenine dinucleotide (NaAD). The polypeptide is Probable nicotinate-nucleotide adenylyltransferase (Saccharopolyspora erythraea (strain ATCC 11635 / DSM 40517 / JCM 4748 / NBRC 13426 / NCIMB 8594 / NRRL 2338)).